A 410-amino-acid polypeptide reads, in one-letter code: PHQIYNVTWVITNVQTNTQANATSMLGTLTDAYPTLHVDLCDLVGNTWEPIVPDLRGWASYSSSKYGCKTADRKKQQQTYPFYVCPGHAPSLGPKGTHCGGAQDGFCAAWGCETTGEAWWKPTSSWDYITVKRGSSQDNSCEGKCNPLVLQFTQKGRQASWDGPKMWGLRLYRTGYDPIALFTVSRQVSTITPPQAMGPNLVLPDRKPPSRQSQTGSKVATQRPQTNESAPRSIAPTTMGPKRIGTGDRLINLVQGTYLALNATDPNKTKDCWLCLVSRPPYYEGIAILGNYSNQTNPPPSCLSIPQHKLTISEVSGQGLCIGTVPKTHQALCNETQQGHTGAHYLAAPNGTYWACNTGLTPCISMAVLNWTSDFCVLIELWPRVTYHQPEYVYTHFAKAVRFRREPISL.

Residues 1–410 lie on the Extracellular side of the membrane; it reads PHQIYNVTWV…VRFRREPISL (410 aa). 2 N-linked (GlcNAc...) asparagine; by host glycosylation sites follow: N6 and N21. Cystine bridges form between C85–C107 and C99–C112. A disordered region spans residues 193–242; that stretch reads PPQAMGPNLVLPDRKPPSRQSQTGSKVATQRPQTNESAPRSIAPTTMGPK. Over residues 210 to 230 the composition is skewed to polar residues; that stretch reads SRQSQTGSKVATQRPQTNESA. 3 N-linked (GlcNAc...) asparagine; by host glycosylation sites follow: N227, N262, and N267. The short motif at 272-275 is the CXXC element; the sequence is CWLC. N294, N334, N350, and N370 each carry an N-linked (GlcNAc...) asparagine; by host glycan.

The mature envelope protein (Env) consists of a trimer of SU-TM heterodimers attached by a labile interchain disulfide bond. In terms of processing, specific enzymatic cleavages in vivo yield mature proteins. Envelope glycoproteins are synthesized as an inactive precursor that is N-glycosylated and processed likely by host cell furin or by a furin-like protease in the Golgi to yield the mature SU and TM proteins. The cleavage site between SU and TM requires the minimal sequence [KR]-X-[KR]-R.

The protein resides in the virion membrane. It localises to the host cell membrane. The surface protein (SU) attaches the virus to the host cell by binding to its receptor. This interaction triggers the refolding of the transmembrane protein (TM) and is thought to activate its fusogenic potential by unmasking its fusion peptide. Fusion occurs at the host cell plasma membrane. In terms of biological role, the transmembrane protein (TM) acts as a class I viral fusion protein. Under the current model, the protein has at least 3 conformational states: pre-fusion native state, pre-hairpin intermediate state, and post-fusion hairpin state. During viral and target cell membrane fusion, the coiled coil regions (heptad repeats) assume a trimer-of-hairpins structure, positioning the fusion peptide in close proximity to the C-terminal region of the ectodomain. The formation of this structure appears to drive apposition and subsequent fusion of viral and target cell membranes. Membranes fusion leads to delivery of the nucleocapsid into the cytoplasm. The sequence is that of Envelope glycoprotein (env) from Feline leukemia virus (strain C/FA27).